The chain runs to 474 residues: L-arabinose isomerase (474 aa).

Positions 306, 331, 348, and 447 each coordinate Mn(2+).

The protein belongs to the arabinose isomerase family. It depends on Mn(2+) as a cofactor.

It catalyses the reaction beta-L-arabinopyranose = L-ribulose. It participates in carbohydrate degradation; L-arabinose degradation via L-ribulose; D-xylulose 5-phosphate from L-arabinose (bacterial route): step 1/3. Its function is as follows. Catalyzes the conversion of L-arabinose to L-ribulose. This chain is L-arabinose isomerase, found in Pediococcus pentosaceus (strain ATCC 25745 / CCUG 21536 / LMG 10740 / 183-1w).